The sequence spans 194 residues: uncharacterized protein (194 aa).

In terms of domain architecture, HTH tetR-type spans 6-66 (SGKYEKILQA…AIAENLLTHT (61 aa)). Residues 29–48 (SISDIVKKAGTAQGTFYLYF) constitute a DNA-binding region (H-T-H motif).

This is an uncharacterized protein from Bacillus subtilis (strain 168).